Here is a 391-residue protein sequence, read N- to C-terminus: DNA replication and repair protein RecF (391 aa).

Glycine 30–threonine 37 is an ATP binding site.

This sequence belongs to the RecF family.

The protein resides in the cytoplasm. Its function is as follows. The RecF protein is involved in DNA metabolism; it is required for DNA replication and normal SOS inducibility. RecF binds preferentially to single-stranded, linear DNA. It also seems to bind ATP. The polypeptide is DNA replication and repair protein RecF (Saccharopolyspora erythraea (strain ATCC 11635 / DSM 40517 / JCM 4748 / NBRC 13426 / NCIMB 8594 / NRRL 2338)).